The sequence spans 361 residues: Phospho-N-acetylmuramoyl-pentapeptide-transferase (361 aa).

The next 10 membrane-spanning stretches (helical) occupy residues 28–48, 74–94, 99–119, 133–153, 168–188, 203–223, 236–256, 263–283, 288–308, and 338–358; these read LAII…IKFL, TMGG…LADL, IWIT…DDYA, SKLV…EYLD, LNLD…VGSS, VPIA…GNLI, TGEL…FLWF, VFMG…ISVI, IVLA…ILQV, and KVVI…LSSL.

Belongs to the glycosyltransferase 4 family. MraY subfamily. Mg(2+) is required as a cofactor.

The protein resides in the cell inner membrane. The catalysed reaction is UDP-N-acetyl-alpha-D-muramoyl-L-alanyl-gamma-D-glutamyl-meso-2,6-diaminopimeloyl-D-alanyl-D-alanine + di-trans,octa-cis-undecaprenyl phosphate = di-trans,octa-cis-undecaprenyl diphospho-N-acetyl-alpha-D-muramoyl-L-alanyl-D-glutamyl-meso-2,6-diaminopimeloyl-D-alanyl-D-alanine + UMP. The protein operates within cell wall biogenesis; peptidoglycan biosynthesis. Its function is as follows. Catalyzes the initial step of the lipid cycle reactions in the biosynthesis of the cell wall peptidoglycan: transfers peptidoglycan precursor phospho-MurNAc-pentapeptide from UDP-MurNAc-pentapeptide onto the lipid carrier undecaprenyl phosphate, yielding undecaprenyl-pyrophosphoryl-MurNAc-pentapeptide, known as lipid I. The chain is Phospho-N-acetylmuramoyl-pentapeptide-transferase from Rickettsia akari (strain Hartford).